The sequence spans 957 residues: Glycine dehydrogenase (decarboxylating) (957 aa).

Lysine 708 is modified (N6-(pyridoxal phosphate)lysine).

It belongs to the GcvP family. In terms of assembly, the glycine cleavage system is composed of four proteins: P, T, L and H. Pyridoxal 5'-phosphate is required as a cofactor.

It carries out the reaction N(6)-[(R)-lipoyl]-L-lysyl-[glycine-cleavage complex H protein] + glycine + H(+) = N(6)-[(R)-S(8)-aminomethyldihydrolipoyl]-L-lysyl-[glycine-cleavage complex H protein] + CO2. Functionally, the glycine cleavage system catalyzes the degradation of glycine. The P protein binds the alpha-amino group of glycine through its pyridoxal phosphate cofactor; CO(2) is released and the remaining methylamine moiety is then transferred to the lipoamide cofactor of the H protein. The chain is Glycine dehydrogenase (decarboxylating) from Cronobacter sakazakii (strain ATCC BAA-894) (Enterobacter sakazakii).